Reading from the N-terminus, the 152-residue chain is Transcriptional regulator MraZ (152 aa).

SpoVT-AbrB domains lie at 5–52 (ATLV…PLPE) and 81–124 (ASEC…DEQT).

The protein belongs to the MraZ family. In terms of assembly, forms oligomers.

The protein resides in the cytoplasm. It is found in the nucleoid. Negatively regulates its own expression and that of the subsequent genes in the proximal part of the division and cell wall (dcw) gene cluster. Acts by binding directly to DNA. May also regulate the expression of genes outside the dcw cluster. This is Transcriptional regulator MraZ from Pectobacterium atrosepticum (strain SCRI 1043 / ATCC BAA-672) (Erwinia carotovora subsp. atroseptica).